Consider the following 529-residue polypeptide: Ell-associated factor Eaf (529 aa).

2 disordered regions span residues alanine 155–threonine 235 and alanine 253–aspartate 529. Polar residues predominate over residues glutamate 167–asparagine 186. Low complexity-rich tracts occupy residues arginine 194 to serine 215, serine 256 to glycine 265, histidine 306 to asparagine 315, and glutamine 327 to glutamine 346. Serine 196 carries the post-translational modification Phosphoserine. Positions arginine 347–methionine 359 are enriched in polar residues. Over residues aspartate 401–aspartate 416 the composition is skewed to acidic residues. 4 stretches are compositionally biased toward low complexity: residues histidine 431 to glutamine 451, glutamine 469 to glutamine 480, glutamine 488 to serine 499, and asparagine 510 to serine 523.

It belongs to the EAF family.

Its subcellular location is the nucleus. In terms of biological role, promotes transcriptional elongation by Su(Tpl)/ELL. Essential for development. This chain is Ell-associated factor Eaf, found in Drosophila grimshawi (Hawaiian fruit fly).